The following is a 275-amino-acid chain: Phosphonoacetaldehyde hydrolase (275 aa).

The Nucleophile role is filled by Asp15. Residues Asp15 and Ala17 each contribute to the Mg(2+) site. The active-site Schiff-base intermediate with substrate is the Lys56. Asp189 is a binding site for Mg(2+).

It belongs to the HAD-like hydrolase superfamily. PhnX family. As to quaternary structure, homodimer. Mg(2+) is required as a cofactor.

It carries out the reaction phosphonoacetaldehyde + H2O = acetaldehyde + phosphate + H(+). Functionally, involved in phosphonate degradation. This is Phosphonoacetaldehyde hydrolase from Pseudomonas paraeruginosa (strain DSM 24068 / PA7) (Pseudomonas aeruginosa (strain PA7)).